The primary structure comprises 227 residues: SPbeta prophage-derived uncharacterized membrane protein YomJ (227 aa).

The next 2 membrane-spanning stretches (helical) occupy residues 16–36 (LFFL…IVGL) and 131–151 (GIVA…GLSA).

The protein resides in the cell membrane. This Bacillus subtilis (strain 168) protein is SPbeta prophage-derived uncharacterized membrane protein YomJ (yomJ).